A 91-amino-acid polypeptide reads, in one-letter code: MASVSISCPSCSATDGVVRNGKSTAGHQRYLCSHCRKTWQLQFTYTASQPGTHQKIIDMAMNGVGCRATARIMGVGLNTILRHLKNSGRSR.

Belongs to the IS1 elements InsA family.

In terms of biological role, absolutely required for transposition of IS1. This is Insertion element IS1 1 protein InsA (insA1) from Escherichia coli (strain K12).